The primary structure comprises 504 residues: Activin receptor type-1 (504 aa).

The N-terminal stretch at Met-1 to Ser-16 is a signal peptide. Residues Val-17–Leu-119 are Extracellular-facing. N-linked (GlcNAc...) asparagine glycosylation occurs at Asn-94. Residues Ile-120–Ile-140 form a helical membrane-spanning segment. Residues Ile-141–Cys-504 are Cytoplasmic-facing. Residues Ser-173–Gln-202 form the GS domain. In terms of domain architecture, Protein kinase spans Ile-203–Leu-497. ATP is bound by residues Val-209–Val-217 and Lys-230. Asp-331 serves as the catalytic Proton acceptor.

The protein belongs to the protein kinase superfamily. TKL Ser/Thr protein kinase family. TGFB receptor subfamily. Mg(2+) is required as a cofactor. It depends on Mn(2+) as a cofactor.

The protein resides in the membrane. The enzyme catalyses L-threonyl-[receptor-protein] + ATP = O-phospho-L-threonyl-[receptor-protein] + ADP + H(+). It carries out the reaction L-seryl-[receptor-protein] + ATP = O-phospho-L-seryl-[receptor-protein] + ADP + H(+). In terms of biological role, on ligand binding, forms a receptor complex consisting of two type II and two type I transmembrane serine/threonine kinases. Type II receptors phosphorylate and activate type I receptors which autophosphorylate, then bind and activate SMAD transcriptional regulators. Receptor for activin. The sequence is that of Activin receptor type-1 (ACVR1) from Gallus gallus (Chicken).